The primary structure comprises 502 residues: Maturase K (502 aa).

The protein belongs to the intron maturase 2 family. MatK subfamily.

Its subcellular location is the plastid. It is found in the chloroplast. Functionally, usually encoded in the trnK tRNA gene intron. Probably assists in splicing its own and other chloroplast group II introns. This is Maturase K from Theobroma cacao (Cacao).